The sequence spans 176 residues: Translation initiation factor IF-3 (176 aa).

The protein belongs to the IF-3 family. As to quaternary structure, monomer.

The protein localises to the cytoplasm. In terms of biological role, IF-3 binds to the 30S ribosomal subunit and shifts the equilibrium between 70S ribosomes and their 50S and 30S subunits in favor of the free subunits, thus enhancing the availability of 30S subunits on which protein synthesis initiation begins. The protein is Translation initiation factor IF-3 of Streptococcus mutans serotype c (strain ATCC 700610 / UA159).